The chain runs to 540 residues: CTP synthase (540 aa).

Positions 1-264 (MQYIVVTGGV…ISYLSKLSGK (264 aa)) are amidoligase domain. Residue S12 coordinates CTP. UTP is bound at residue S12. 13–18 (GLGKGT) contacts ATP. Y53 provides a ligand contact to L-glutamine. An ATP-binding site is contributed by D70. Positions 70 and 140 each coordinate Mg(2+). Residues 147–149 (DIE), 185–190 (KTKPTQ), and R221 each bind CTP. UTP contacts are provided by residues 185–190 (KTKPTQ) and R221. Residues 294–527 (YVDLHDAYIS…VQQALIYKKN (234 aa)) form the Glutamine amidotransferase type-1 domain. G347 is a binding site for L-glutamine. C374 serves as the catalytic Nucleophile; for glutamine hydrolysis. L-glutamine is bound by residues 375–378 (LGFQ), E398, and R455. Residues H500 and E502 contribute to the active site.

This sequence belongs to the CTP synthase family. Homotetramer.

The catalysed reaction is UTP + L-glutamine + ATP + H2O = CTP + L-glutamate + ADP + phosphate + 2 H(+). It carries out the reaction L-glutamine + H2O = L-glutamate + NH4(+). The enzyme catalyses UTP + NH4(+) + ATP = CTP + ADP + phosphate + 2 H(+). Its pathway is pyrimidine metabolism; CTP biosynthesis via de novo pathway; CTP from UDP: step 2/2. Allosterically activated by GTP, when glutamine is the substrate; GTP has no effect on the reaction when ammonia is the substrate. The allosteric effector GTP functions by stabilizing the protein conformation that binds the tetrahedral intermediate(s) formed during glutamine hydrolysis. Inhibited by the product CTP, via allosteric rather than competitive inhibition. Its function is as follows. Catalyzes the ATP-dependent amination of UTP to CTP with either L-glutamine or ammonia as the source of nitrogen. Regulates intracellular CTP levels through interactions with the four ribonucleotide triphosphates. This is CTP synthase from Thermoplasma volcanium (strain ATCC 51530 / DSM 4299 / JCM 9571 / NBRC 15438 / GSS1).